The following is a 334-amino-acid chain: Galactinol synthase 3 (334 aa).

Lysine 97 is a catalytic residue. Mn(2+) is bound by residues aspartate 113, aspartate 115, and histidine 251.

Belongs to the glycosyltransferase 8 family. Galactosyltransferase subfamily. A divalent metal cation is required as a cofactor.

It localises to the cytoplasm. The enzyme catalyses myo-inositol + UDP-alpha-D-galactose = alpha-D-galactosyl-(1-&gt;3)-1D-myo-inositol + UDP + H(+). Galactinol synthase involved in the biosynthesis of raffinose family oligosaccharides (RFOs) that function as osmoprotectants. May promote plant stress tolerance. This chain is Galactinol synthase 3 (GOLS3), found in Arabidopsis thaliana (Mouse-ear cress).